The sequence spans 118 residues: Putative membrane protein insertion efficiency factor (118 aa).

The disordered stretch occupies residues 76–118 (WDPVPQRRPRRRDAAAADAAMSAPHACKGSPHAVVGDTNDGST). Low complexity predominate over residues 91 to 101 (AADAAMSAPHA).

Belongs to the UPF0161 family.

Its subcellular location is the cell membrane. Could be involved in insertion of integral membrane proteins into the membrane. In Nocardia farcinica (strain IFM 10152), this protein is Putative membrane protein insertion efficiency factor.